The following is a 316-amino-acid chain: HTH-type transcriptional regulator cbl (316 aa).

The HTH lysR-type domain maps to methionine 1–methionine 59. A DNA-binding region (H-T-H motif) is located at residues leucine 19–arginine 38.

Belongs to the LysR transcriptional regulatory family.

May be an accessory regulatory protein within the cys regulon. The polypeptide is HTH-type transcriptional regulator cbl (cbl) (Escherichia coli (strain K12)).